The chain runs to 279 residues: Undecaprenyl-diphosphatase (279 aa).

Helical transmembrane passes span 2-22 (LIIE…TEWL), 44-64 (AFIE…VMLI), 85-105 (WQLW…AVPL), 113-133 (FYFM…FIWI), 163-183 (VLSI…AIIL), 188-208 (TVAA…YSGL), 223-243 (AQVL…LLAI), and 255-275 (FTIF…YSFF).

It belongs to the UppP family.

The protein localises to the cell membrane. The enzyme catalyses di-trans,octa-cis-undecaprenyl diphosphate + H2O = di-trans,octa-cis-undecaprenyl phosphate + phosphate + H(+). Its function is as follows. Catalyzes the dephosphorylation of undecaprenyl diphosphate (UPP). Confers resistance to bacitracin. This is Undecaprenyl-diphosphatase from Streptococcus pyogenes serotype M28 (strain MGAS6180).